The primary structure comprises 90 residues: UPF0335 protein RPA4190 (90 aa).

Belongs to the UPF0335 family.

The chain is UPF0335 protein RPA4190 from Rhodopseudomonas palustris (strain ATCC BAA-98 / CGA009).